Here is a 549-residue protein sequence, read N- to C-terminus: Undecaprenyl phosphate-alpha-4-amino-4-deoxy-L-arabinose arabinosyl transferase 1 (549 aa).

Transmembrane regions (helical) follow at residues 9 to 29, 80 to 102, 112 to 132, 133 to 153, 176 to 196, 204 to 224, 257 to 277, 290 to 310, 312 to 332, 342 to 362, 377 to 397, and 402 to 422; these read LLLIAFGLFYLLPLATHGLWI, LFGVRVASALSTGLSVVLAYLLA, SLASALLYMSFTVVALQAGYA, NLDPQFTFWVNLSLVALWFTF, FMTKGFLAWLLPVLVALPYAI, LLIYGGIGVLVAILISLPWAL, WWYYLPLLVGFSVPWVLLLPA, SSGFLLLWLVLPLAFFSLSKG, LPAYILPCLLPLALLMGNTLV, LLAFNGVLNLVAGLLGLLALV, HLVLVYVLLLGWILSNLLQAM, and LWAAPALGSFLLVALAPAALP.

Belongs to the glycosyltransferase 83 family.

The protein localises to the cell inner membrane. The catalysed reaction is 4-amino-4-deoxy-alpha-L-arabinopyranosyl di-trans,octa-cis-undecaprenyl phosphate + lipid IVA = lipid IIA + di-trans,octa-cis-undecaprenyl phosphate.. Its pathway is lipopolysaccharide metabolism; 4-amino-4-deoxy-beta-L-arabinose-lipid A biosynthesis. Its function is as follows. Catalyzes the transfer of the L-Ara4N moiety of the glycolipid undecaprenyl phosphate-alpha-L-Ara4N to lipid A. The modified arabinose is attached to lipid A and is required for resistance to polymyxin and cationic antimicrobial peptides. The protein is Undecaprenyl phosphate-alpha-4-amino-4-deoxy-L-arabinose arabinosyl transferase 1 of Pseudomonas fluorescens (strain ATCC BAA-477 / NRRL B-23932 / Pf-5).